We begin with the raw amino-acid sequence, 392 residues long: Probable inactive serine/threonine-protein kinase DDB_G0280855 (392 aa).

One can recognise a Protein kinase domain in the interval Ile-46–Phe-349. ATP-binding positions include Tyr-52 to Met-60 and Lys-75.

This sequence belongs to the protein kinase superfamily. CMGC Ser/Thr protein kinase family. MAP kinase subfamily.

In Dictyostelium discoideum (Social amoeba), this protein is Probable inactive serine/threonine-protein kinase DDB_G0280855.